The primary structure comprises 356 residues: Alanine racemase, catabolic (356 aa).

K35 (proton acceptor; specific for D-alanine) is an active-site residue. K35 carries the post-translational modification N6-(pyridoxal phosphate)lysine. Residue R130 participates in substrate binding. Y253 (proton acceptor; specific for L-alanine) is an active-site residue. M301 contributes to the substrate binding site.

Belongs to the alanine racemase family. The cofactor is pyridoxal 5'-phosphate.

The enzyme catalyses L-alanine = D-alanine. In terms of biological role, isomerizes L-alanine to D-alanine which is then oxidized to pyruvate by DadA. The protein is Alanine racemase, catabolic (dadX) of Escherichia coli O157:H7.